A 98-amino-acid chain; its full sequence is NADH-ubiquinone oxidoreductase chain 4L (98 aa).

The next 3 helical transmembrane spans lie at 1–21 (MIPT…GMLT), 27–47 (VASL…TTLI), and 61–81 (IILL…LISI).

It belongs to the complex I subunit 4L family. In terms of assembly, core subunit of respiratory chain NADH dehydrogenase (Complex I) which is composed of 45 different subunits.

The protein localises to the mitochondrion inner membrane. The enzyme catalyses a ubiquinone + NADH + 5 H(+)(in) = a ubiquinol + NAD(+) + 4 H(+)(out). In terms of biological role, core subunit of the mitochondrial membrane respiratory chain NADH dehydrogenase (Complex I) which catalyzes electron transfer from NADH through the respiratory chain, using ubiquinone as an electron acceptor. Part of the enzyme membrane arm which is embedded in the lipid bilayer and involved in proton translocation. The chain is NADH-ubiquinone oxidoreductase chain 4L (MT-ND4L) from Macaca nigra (Celebes black macaque).